Consider the following 502-residue polypeptide: Probable cobyric acid synthase (502 aa).

In terms of domain architecture, GATase cobBQ-type spans 250 to 448 (KITIGTLRLP…FHGIFHNFEF (199 aa)). Cysteine 330 acts as the Nucleophile in catalysis. Histidine 440 is an active-site residue.

Belongs to the CobB/CobQ family. CobQ subfamily.

It functions in the pathway cofactor biosynthesis; adenosylcobalamin biosynthesis. Catalyzes amidations at positions B, D, E, and G on adenosylcobyrinic A,C-diamide. NH(2) groups are provided by glutamine, and one molecule of ATP is hydrogenolyzed for each amidation. The polypeptide is Probable cobyric acid synthase (Methanosphaera stadtmanae (strain ATCC 43021 / DSM 3091 / JCM 11832 / MCB-3)).